We begin with the raw amino-acid sequence, 320 residues long: Aldose reductase (320 aa).

The active-site Proton donor is the Tyr-60. His-121 is a binding site for substrate. Position 215–269 (215–269) interacts with NADP(+); the sequence is SPLGSSEKNLAHDPVVEKVANKLNKTPGQVLIKWALQRGTSVIPKSSKDERIKEN.

It belongs to the aldo/keto reductase family.

It catalyses the reaction an alditol + NAD(+) = an aldose + NADH + H(+). The catalysed reaction is an alditol + NADP(+) = an aldose + NADPH + H(+). In Hordeum vulgare (Barley), this protein is Aldose reductase.